The primary structure comprises 504 residues: MRKRALISVYDKTGILDFAKFLVSKGIEIISTGGTYKYLKENNIEVIEVSKITNFEEMLDGRVKTLHPNIHGGILALRDNEEHMRTLKERNIDTIDYVIVNLYPFFEKVKEDLSFEEKIEFIDIGGPTMLRSAAKSFKNVVVISDVKDYESIKEEINKSDDVSYEARKKLAGKVFNLTSAYDAAISQFLLDEDFSEYLNISYKKFMEMRYGENSHQKAAYYTDNMTDGAMKDFKQLNGKELSYNNIRDMDLAWKVVSEFDEICCCAVKHSTPCGVALGDNVEGAYKKAYETDPVSIFGGIVAFNREVDEATAKLLNEIFLEIIIAPSFSKAALEILTKKKNIRLIECKNKPSDKKELIKVDGGILIQDTNNKLYEDLEVVTKAKPTSQEEKDLIFALKVVKFVKSNAIVVAKNLQTLGIGGGEVSRIWAAEKALERAKERFNATDVVLSSDAFFPFKDVIELAAKNGVKAIIQPSGSVNDKDSIEECDRNNISMIFSKLRHFKH.

The region spanning 1 to 144 (MRKRALISVY…KSFKNVVVIS (144 aa)) is the MGS-like domain.

This sequence belongs to the PurH family.

The enzyme catalyses (6R)-10-formyltetrahydrofolate + 5-amino-1-(5-phospho-beta-D-ribosyl)imidazole-4-carboxamide = 5-formamido-1-(5-phospho-D-ribosyl)imidazole-4-carboxamide + (6S)-5,6,7,8-tetrahydrofolate. It carries out the reaction IMP + H2O = 5-formamido-1-(5-phospho-D-ribosyl)imidazole-4-carboxamide. It functions in the pathway purine metabolism; IMP biosynthesis via de novo pathway; 5-formamido-1-(5-phospho-D-ribosyl)imidazole-4-carboxamide from 5-amino-1-(5-phospho-D-ribosyl)imidazole-4-carboxamide (10-formyl THF route): step 1/1. It participates in purine metabolism; IMP biosynthesis via de novo pathway; IMP from 5-formamido-1-(5-phospho-D-ribosyl)imidazole-4-carboxamide: step 1/1. In Fusobacterium nucleatum subsp. nucleatum (strain ATCC 25586 / DSM 15643 / BCRC 10681 / CIP 101130 / JCM 8532 / KCTC 2640 / LMG 13131 / VPI 4355), this protein is Bifunctional purine biosynthesis protein PurH.